The following is a 208-amino-acid chain: UPF0637 protein BCB4264_A4063 (208 aa).

Belongs to the UPF0637 family.

In Bacillus cereus (strain B4264), this protein is UPF0637 protein BCB4264_A4063.